The chain runs to 431 residues: Translation initiation factor 2 subunit gamma (431 aa).

Positions 26–223 (QPCVNIGMVG…ALETQIPTPS (198 aa)) constitute a tr-type G domain. The interval 35–42 (GHVDHGKT) is G1. Aspartate 38, threonine 42, glycine 63, and serine 65 together coordinate Mg(2+). 38-43 (DHGKTT) lines the GTP pocket. The G2 stretch occupies residues 63–67 (GISIR). Residues cysteine 78, cysteine 81, cysteine 93, and cysteine 96 each contribute to the Zn(2+) site. The G3 stretch occupies residues 110–113 (DAPG). Residues 166-169 (NKID) and 201-203 (SAQ) contribute to the GTP site. The interval 166 to 169 (NKID) is G4. A G5 region spans residues 201-203 (SAQ).

It belongs to the TRAFAC class translation factor GTPase superfamily. Classic translation factor GTPase family. EIF2G subfamily. In terms of assembly, heterotrimer composed of an alpha, a beta and a gamma chain. Mg(2+) is required as a cofactor.

The enzyme catalyses GTP + H2O = GDP + phosphate + H(+). Its function is as follows. eIF-2 functions in the early steps of protein synthesis by forming a ternary complex with GTP and initiator tRNA. The polypeptide is Translation initiation factor 2 subunit gamma (Methanosarcina mazei (strain ATCC BAA-159 / DSM 3647 / Goe1 / Go1 / JCM 11833 / OCM 88) (Methanosarcina frisia)).